The following is a 284-amino-acid chain: Bifunctional protein FolD (284 aa).

Residues Gly-166–Ser-168 and Ile-232 each bind NADP(+).

This sequence belongs to the tetrahydrofolate dehydrogenase/cyclohydrolase family. Homodimer.

The enzyme catalyses (6R)-5,10-methylene-5,6,7,8-tetrahydrofolate + NADP(+) = (6R)-5,10-methenyltetrahydrofolate + NADPH. It carries out the reaction (6R)-5,10-methenyltetrahydrofolate + H2O = (6R)-10-formyltetrahydrofolate + H(+). Its pathway is one-carbon metabolism; tetrahydrofolate interconversion. Catalyzes the oxidation of 5,10-methylenetetrahydrofolate to 5,10-methenyltetrahydrofolate and then the hydrolysis of 5,10-methenyltetrahydrofolate to 10-formyltetrahydrofolate. This Pseudomonas paraeruginosa (strain DSM 24068 / PA7) (Pseudomonas aeruginosa (strain PA7)) protein is Bifunctional protein FolD.